Here is a 155-residue protein sequence, read N- to C-terminus: Ribosomal RNA large subunit methyltransferase H (155 aa).

S-adenosyl-L-methionine contacts are provided by residues leucine 73, glycine 104, and 123-128; that span reads LSALTL.

The protein belongs to the RNA methyltransferase RlmH family. In terms of assembly, homodimer.

Its subcellular location is the cytoplasm. The catalysed reaction is pseudouridine(1915) in 23S rRNA + S-adenosyl-L-methionine = N(3)-methylpseudouridine(1915) in 23S rRNA + S-adenosyl-L-homocysteine + H(+). Its function is as follows. Specifically methylates the pseudouridine at position 1915 (m3Psi1915) in 23S rRNA. The sequence is that of Ribosomal RNA large subunit methyltransferase H from Coxiella burnetii (strain Dugway 5J108-111).